We begin with the raw amino-acid sequence, 660 residues long: MLLHFILYAALSSVVTSVSLQPRLQDGLALTPQMGWNTYNHYSCSPNETIVQSNAQALVDLGLSSLGYRYVTTDCGWTVADRLPDGSLTWNDTLFPQGFPAMGDFLHDLGLLFGVYQDSGILLCGSPPNETGSLYHEEQDARTFASWNVDSLKYDNCYSDAATGYPNVNYAPSTSPEPRFANMSHALLQQNRTILFQICEWGISFPANWAPALGHSWRIGNDIIPDWRTIFRIINQAAPQTDVAGPGQWPDLDMLEVGNNIFSLPEEQTHFSLWAILKSPLIIGAALKDELTAINDASLAVLKQKDVIAFNQDALGKSASLRRRWTEEGYEVWSGPLSNGRTVAAVINWHNESKDLTLDLPDVGLQHAGTVKNIWDGTTARDVLTSYTATVAGHGTMLLELQNTTAVGVYPRGVFGVSSGQTTTFQNIYAVTTSAKYIISVYFSQPASSTETITIGSNANQSMISAQVPASSTLVSAEIPLTAGSSNTITINTSIPIDAIHVTPPNGTYYPCTNFTLAGSTTLTTCGSGYCQPVGSKVGYISPSGTAKATISATTSGSKYLEIDWINNDIAFDSSWGWGSNSRNLTVTVNSEDPVRIEVPLSGRHSELFGPGLGWWDTSTLGLLTSGWKEGLNEVVVGNVGGDEGFQSYGADFVGIRVLD.

The N-terminal stretch at 1–20 (MLLHFILYAALSSVVTSVSL) is a signal peptide. Residues N47, N91, and N129 are each glycosylated (N-linked (GlcNAc...) asparagine). A disulfide bond links C124 and C157. The active-site Nucleophile is the D155. N-linked (GlcNAc...) asparagine glycans are attached at residues N182 and N191. Residue 200–204 (EWGIS) coordinates substrate. Residue D222 is the Proton donor of the active site. N351, N403, N460, N492, N506, N514, and N584 each carry an N-linked (GlcNAc...) asparagine glycan.

It belongs to the glycosyl hydrolase 27 family.

The protein localises to the secreted. The enzyme catalyses Hydrolysis of terminal, non-reducing alpha-D-galactose residues in alpha-D-galactosides, including galactose oligosaccharides, galactomannans and galactolipids.. In terms of biological role, hydrolyzes a variety of simple alpha-D-galactoside as well as more complex molecules such as oligosaccharides and polysaccharides. This chain is Probable alpha-galactosidase D (aglD), found in Aspergillus niger (strain ATCC MYA-4892 / CBS 513.88 / FGSC A1513).